The chain runs to 151 residues: UPF0178 protein YaiI (151 aa).

Belongs to the UPF0178 family.

This chain is UPF0178 protein YaiI, found in Salmonella arizonae (strain ATCC BAA-731 / CDC346-86 / RSK2980).